A 122-amino-acid chain; its full sequence is Large ribosomal subunit protein uL14 (122 aa).

Belongs to the universal ribosomal protein uL14 family. In terms of assembly, part of the 50S ribosomal subunit. Forms a cluster with proteins L3 and L19. In the 70S ribosome, L14 and L19 interact and together make contacts with the 16S rRNA in bridges B5 and B8.

Its function is as follows. Binds to 23S rRNA. Forms part of two intersubunit bridges in the 70S ribosome. The polypeptide is Large ribosomal subunit protein uL14 (Mycobacterium ulcerans (strain Agy99)).